A 308-amino-acid polypeptide reads, in one-letter code: Putative gluconeogenesis factor (308 aa).

This sequence belongs to the gluconeogenesis factor family.

It is found in the cytoplasm. Required for morphogenesis under gluconeogenic growth conditions. This is Putative gluconeogenesis factor from Pasteurella multocida (strain Pm70).